The sequence spans 417 residues: 4-hydroxy-3-methylbut-2-en-1-yl diphosphate synthase (flavodoxin) (417 aa).

Cys304, Cys307, Cys350, and Glu357 together coordinate [4Fe-4S] cluster.

It belongs to the IspG family. [4Fe-4S] cluster is required as a cofactor.

It catalyses the reaction (2E)-4-hydroxy-3-methylbut-2-enyl diphosphate + oxidized [flavodoxin] + H2O + 2 H(+) = 2-C-methyl-D-erythritol 2,4-cyclic diphosphate + reduced [flavodoxin]. The protein operates within isoprenoid biosynthesis; isopentenyl diphosphate biosynthesis via DXP pathway; isopentenyl diphosphate from 1-deoxy-D-xylulose 5-phosphate: step 5/6. Its function is as follows. Converts 2C-methyl-D-erythritol 2,4-cyclodiphosphate (ME-2,4cPP) into 1-hydroxy-2-methyl-2-(E)-butenyl 4-diphosphate. The protein is 4-hydroxy-3-methylbut-2-en-1-yl diphosphate synthase (flavodoxin) of Rhizobium meliloti (strain 1021) (Ensifer meliloti).